Here is a 650-residue protein sequence, read N- to C-terminus: Protein ANTI-SILENCING 1 (650 aa).

The region spanning 38-169 is the BAH domain; the sequence is DEYRLYDCVL…VGSCKVVDTI (132 aa). Disordered regions lie at residues 202-223, 229-248, 257-359, and 425-448; these read NGKS…GSVR, AFES…EKEK, KSTL…QKLD, and VTEK…ADDN. 2 stretches are compositionally biased toward basic and acidic residues: residues 259–270 and 277–287; these read TLAEERSNKDSG and NGKDQESEVKK. The span at 302–315 shows a compositional bias: polar residues; that stretch reads SNSFEASGSRTIHS. 2 stretches are compositionally biased toward basic and acidic residues: residues 348–358 and 438–448; these read LDDRPLKKQKL and RAEDKMSADDN. The 84-residue stretch at 486–569 folds into the RRM domain; sequence TVVLLQNLDP…RPLVASFAKI (84 aa).

In terms of assembly, component of the ASI1-AIPP1-EDM2 (AAE) RNA regulatory complex composed of at least AIPP1/EDM3, ASI1 and EDM2 and may contain CPL2, AIPP2 and AIPP3/BDT1. Binds directly to AIPP1/EDM3 and AIPP2.

Collaboratively with AIPP1/EDM3 and EDM2, the AAE complex regulates alternative RNA processing (e.g. alternative splicing) and epigenetic silencing (e.g. H3K9me2) of intronic heterochromatin-containing genes as well as genic heterochromatin-containing genes by promoting distal 3' polyadenylation; may associate with intronic heterochromatin and bind gene transcripts to modulate polyadenylation. Required to prevent promoter DNA hypermethylation and transcriptional silencing of some transgenes. Plays a similar role to that of the histone H3K9 demethylase JMJ25/IBM1 in preventing CHG methylation in the bodies of numerous genes. RNA-binding protein that ensures the proper expression of JMJ25/IBM1 full-length transcript by associating with an intronic heterochromatic repeat element of JMJ25/IBM1. Also modulates transposable elements (TE) expression. Contributes to a unique mechanism to deal with the collateral effect of silencing intronic repeat elements. The sequence is that of Protein ANTI-SILENCING 1 from Arabidopsis thaliana (Mouse-ear cress).